Here is a 631-residue protein sequence, read N- to C-terminus: Phosphomethylpyrimidine synthase (631 aa).

Substrate is bound by residues Asn-239, Met-268, Tyr-297, His-333, 353–355 (SRG), 394–397 (DGLR), and Glu-433. His-437 serves as a coordination point for Zn(2+). Tyr-460 contacts substrate. His-501 provides a ligand contact to Zn(2+). Positions 581, 584, and 589 each coordinate [4Fe-4S] cluster.

The protein belongs to the ThiC family. In terms of assembly, homodimer. [4Fe-4S] cluster serves as cofactor.

The enzyme catalyses 5-amino-1-(5-phospho-beta-D-ribosyl)imidazole + S-adenosyl-L-methionine = 4-amino-2-methyl-5-(phosphooxymethyl)pyrimidine + CO + 5'-deoxyadenosine + formate + L-methionine + 3 H(+). It participates in cofactor biosynthesis; thiamine diphosphate biosynthesis. In terms of biological role, catalyzes the synthesis of the hydroxymethylpyrimidine phosphate (HMP-P) moiety of thiamine from aminoimidazole ribotide (AIR) in a radical S-adenosyl-L-methionine (SAM)-dependent reaction. The protein is Phosphomethylpyrimidine synthase of Escherichia fergusonii (strain ATCC 35469 / DSM 13698 / CCUG 18766 / IAM 14443 / JCM 21226 / LMG 7866 / NBRC 102419 / NCTC 12128 / CDC 0568-73).